Here is a 414-residue protein sequence, read N- to C-terminus: MNNLPRNSQFDSSSIINDLPLDLLDEILFRLEPKSMAMMRCTNNSIKSYLSDPRFGPEYPSWVRPSLFNLGSYGATYVCCHPLVSSCDYMSPGNGVELFDGSADCYIFGSCSGLLLLYIGCLFVANPLTKRFRILDHSGSKLIPMIVNGGLKGLSGISYPGGNVACTERAMCVGFAVNRNLTTKRFKIVGILEMENVYGFEINEGDSWRLSETSITTSSKSDLTTRMKPVYLDNTLHWLRNDGSIMSFNPETEQACLIPSIFHREPDTKLLFAESVKINRLTLISGTIETISVYTLVENHKWTLTRRIKNISIEEETLVYWNIAMYDGKCLVVRVKKMGLEPLASVLHVYDMEANSWGVLVSTLAWPNCVRDFYKLTPSLFFVEEDEQQKVLVASNDRRISYINSIMGLIDTTK.

The F-box domain maps to 13–65; that stretch reads SSIINDLPLDLLDEILFRLEPKSMAMMRCTNNSIKSYLSDPRFGPEYPSWVRP. Kelch repeat units lie at residues 281–328 and 331–378; these read LTLI…MYDG and LVVR…KLTP.

As to quaternary structure, interacts with DEK3.

It functions in the pathway protein modification; protein ubiquitination. Functionally, probable component of an E3 ubiquitin ligase complex. This Arabidopsis thaliana (Mouse-ear cress) protein is Putative F-box/kelch-repeat protein At1g20940.